A 449-amino-acid chain; its full sequence is Glutamyl-tRNA reductase (449 aa).

Residues 58-61, Ser-121, 126-128, and Gln-132 contribute to the substrate site; these read TCNR and ETQ. Cys-59 functions as the Nucleophile in the catalytic mechanism. NADP(+) is bound at residue 203 to 208; that stretch reads GLGEMA.

The protein belongs to the glutamyl-tRNA reductase family. In terms of assembly, homodimer.

It carries out the reaction (S)-4-amino-5-oxopentanoate + tRNA(Glu) + NADP(+) = L-glutamyl-tRNA(Glu) + NADPH + H(+). The protein operates within porphyrin-containing compound metabolism; protoporphyrin-IX biosynthesis; 5-aminolevulinate from L-glutamyl-tRNA(Glu): step 1/2. Catalyzes the NADPH-dependent reduction of glutamyl-tRNA(Glu) to glutamate 1-semialdehyde (GSA). The sequence is that of Glutamyl-tRNA reductase from Helicobacter pylori (strain P12).